The primary structure comprises 1400 residues: MSTESGPGTRLRNLPVMGDGLETSQMSTTQAQAQPQPANAASTNPPPPETSNPNKPKRQTNQLQYLLRVVLKTLWKHQFAWPFQQPVDAVKLNLPDYYKIIKTPMDMGTIKKRLENNYYWNAQECIQDFNTMFTNCYIYNKPGDDIVLMAEALEKLFLQKINELPTEETEIMIVQAKGRGRGRKETGAAKPGVSTVPNTTQASTSPQTQTPQQNPPPPVQATTHPFPAVTPDLIAQPPVMTMVPPQPLQTPSPVPPQPPPPPAPVPQPVQSHPPIIATTPQPVKTKKGVKRKADTTTPTTIDPIHEPPSLAPEPKTAKLGPRRESSRPVKPPKKDVPDSQQHPGPEKSSKISEQLKCCSGILKEMFAKKHAAYAWPFYKPVDVEALGLHDYCDIIKHPMDMSTIKSKLESREYRDAQEFGADVRLMFSNCYKYNPPDHEVVAMARKLQDVFEMRFAKMPDEPEEPVVTVSSPAVPPPTKVVAPPSSSDSSSDSSSDSDSSTDDSEEERAQRLAELQEQLKAVHEQLAALSQPQQNKPKKKEKDKKEKKKEKHKKKEEVEENKKSKTKELPPKKTKKNNSSNSNVSKKEPVPTKTKPPPTYESEEEDKCKPMSYEEKRQLSLDINKLPGEKLGRVVHIIQSREPSLKNSNPDEIEIDFETLKPSTLRELERYVTSCLRKKRKPQAEKVDVIAGSSKMKGFSSSESESTSESSSSDSEDSETEMAPKSKKKGHTGRDQKKHHHHHHPQMQPAPAPVPQQPPPPPQQPPPPPPPQQQQQQPPPPPPPPSMPQQTAPAMKSSPPPFITAQVPVLEPQLPGSVFDPIGHFTQPILHLPQPELPPHLPQPPEHSTPPHLNQHAVVSPPALHNALPQQPSRPSNRAAALPPKPTRPPAVSPALAQPPLLPQPPMAQPPQVLLEDEEPPAPPLTSMQMQLYLQQLQKVQPPTPLLPSVKVQSQPPPPLPPPPHPSVQQQQLQPQPPPPPPPQPQPPPQQQHQPPPRPVHLPSMPFSAHIQQPPPPPGQQPTHPPPGQQPPPPQPAKPQQVIQHHPSPRHHKSDPYSAGHLREAPSPLMIHSPQMPQFQSLTHQSPPQQNVQPKKQVKGRAEPQPPGPVMGQGQGCPPASPAAVPMLSQELRPPSVVQPQPLVVVKEEKIHSPIIRSEPFSTSLRPEPPKHPENIKAPVHLPQRPEMKPVDIGRPVIRPPEQSAPPPGAPDKDKQKQEPKTPVAPKKDLKIKNMGSWASLVQKHPTTPSSTAKSSSDSFEHFRRAAREKEEREKALKAQAEHAEKEKERLRQERMRSREDEDALEQARRAHEEARRRQEQQQQQQQQRQEQQQQQQQAAAVAAASAPQAQSSQPQSMLDQQRELARKREQERRRREAMAATIDMNFQSDLLSIFEENLF.

The tract at residues 1–58 (MSTESGPGTRLRNLPVMGDGLETSQMSTTQAQAQPQPANAASTNPPPPETSNPNKPKR) is disordered. Low complexity predominate over residues 23-43 (TSQMSTTQAQAQPQPANAAST). The Bromo 1 domain maps to 58–164 (RQTNQLQYLL…KLFLQKINEL (107 aa)). Lys99 is covalently cross-linked (Glycyl lysine isopeptide (Lys-Gly) (interchain with G-Cter in SUMO2)). 2 disordered regions span residues 176-353 (AKGR…KISE) and 461-616 (EPEE…YEEK). The span at 197-212 (PNTTQASTSPQTQTPQ) shows a compositional bias: low complexity. Over residues 244-267 (PPQPLQTPSPVPPQPPPPPAPVPQ) the composition is skewed to pro residues. Residues 321-337 (PRRESSRPVKPPKKDVP) are compositionally biased toward basic and acidic residues. The Bromo 2 domain maps to 349–458 (SKISEQLKCC…DVFEMRFAKM (110 aa)). Phosphoserine is present on Ser471. Low complexity predominate over residues 479-498 (KVVAPPSSSDSSSDSSSDSD). Phosphoserine; by CK2 occurs at positions 485, 489, and 493. The segment at 485 to 504 (SSSDSSSDSSSDSDSSTDDS) is NPS region. Ser495 carries the phosphoserine modification. Residues Ser499, Ser500, and Ser504 each carry the phosphoserine; by CK2 modification. The interval 525–580 (QLAALSQPQQNKPKKKEKDKKEKKKEKHKKKEEVEENKKSKTKELPPKKTKKNNSS) is BID region. Residues 536–554 (KPKKKEKDKKEKKKEKHKK) show a composition bias toward basic residues. Residues 555-571 (KEEVEENKKSKTKELPP) are compositionally biased toward basic and acidic residues. Lys586 is covalently cross-linked (Glycyl lysine isopeptide (Lys-Gly) (interchain with G-Cter in SUMO2)). One can recognise an NET domain in the interval 601–683 (ESEEEDKCKP…SCLRKKRKPQ (83 aa)). Ser602 carries the phosphoserine modification. Residues 606–616 (DKCKPMSYEEK) are compositionally biased toward basic and acidic residues. Glycyl lysine isopeptide (Lys-Gly) (interchain with G-Cter in SUMO2) cross-links involve residues Lys646 and Lys695. Residues 675–1125 (CLRKKRKPQA…GCPPASPAAV (451 aa)) are disordered. Over residues 700–713 (SSSESESTSESSSS) the composition is skewed to low complexity. Over residues 725-745 (KSKKKGHTGRDQKKHHHHHHP) the composition is skewed to basic residues. 4 stretches are compositionally biased toward pro residues: residues 748–787 (QPAP…PPSM), 835–848 (PELP…PEHS), 883–892 (PPKPTRPPAV), and 900–909 (PLLPQPPMAQ). The span at 928-938 (MQMQLYLQQLQ) shows a compositional bias: low complexity. Pro residues-rich tracts occupy residues 955-966 (QPPPPLPPPPHP), 975-1000 (PQPP…PRPV), and 1013-1037 (QPPP…PQPA). A C-terminal (CTD) region region spans residues 1050-1400 (RHHKSDPYSA…LLSIFEENLF (351 aa)). Residue Lys1053 forms a Glycyl lysine isopeptide (Lys-Gly) (interchain with G-Cter in SUMO2) linkage. A compositionally biased stretch (polar residues) spans 1075–1084 (QMPQFQSLTH). Over residues 1085–1095 (QSPPQQNVQPK) the composition is skewed to low complexity. An N6-acetyllysine; alternate modification is found at Lys1147. A Glycyl lysine isopeptide (Lys-Gly) (interchain with G-Cter in SUMO1); alternate cross-link involves residue Lys1147. Lys1147 participates in a covalent cross-link: Glycyl lysine isopeptide (Lys-Gly) (interchain with G-Cter in SUMO2); alternate. Ser1153 and Ser1162 each carry phosphoserine. The interval 1155 to 1377 (IIRSEPFSTS…KREQERRRRE (223 aa)) is disordered. Basic and acidic residues predominate over residues 1211 to 1232 (PDKDKQKQEPKTPVAPKKDLKI). A Glycyl lysine isopeptide (Lys-Gly) (interchain with G-Cter in SUMO2) cross-link involves residue Lys1233. A phosphoserine mark is found at Ser1237 and Ser1240. Low complexity predominate over residues 1247-1258 (TTPSSTAKSSSD). Residues 1259–1320 (SFEHFRRAAR…AHEEARRRQE (62 aa)) are compositionally biased toward basic and acidic residues. Low complexity predominate over residues 1321–1357 (QQQQQQQQRQEQQQQQQQAAAVAAASAPQAQSSQPQS). Positions 1361–1377 (QQRELARKREQERRRRE) are enriched in basic and acidic residues.

This sequence belongs to the BET family. Binds acetylated histone H4. Interacts with p53/TP53; the interaction is direct. Interacts (via CTD region) with CDK9 and CCNT1, acting as an associated component of P-TEFb complex. Interacts with RELA (when acetylated at 'Lys-310'). Interacts (via NET domain) with NSD3, CHD4, BICRA and ATAD5. The interaction with BICRA bridges BRD4 to the GBAF complex. Interacts (via NET domain) with JMJD6 (via JmjC and N-terminal domains); the interaction is stronger in presence of ssRNA and recruits JMJD6 on distal enhancers. Interacts with NSD3. Interacts with NIPBL. Phosphorylation by CK2 disrupt the intramolecular binding between the bromo domain 2 and the NPS region and promotes binding between the NPS and the BID regions, leading to activate the protein and promote binding to acetylated histones. In absence of phosphorylation, BRD4 does not localize to p53/TP53 target gene promoters, phosphorylation promoting recruitment to p53/TP53 target promoters.

The protein localises to the nucleus. It is found in the chromosome. In terms of biological role, chromatin reader protein that recognizes and binds acetylated histones and plays a key role in transmission of epigenetic memory across cell divisions and transcription regulation. Remains associated with acetylated chromatin throughout the entire cell cycle and provides epigenetic memory for postmitotic G1 gene transcription by preserving acetylated chromatin status and maintaining high-order chromatin structure. During interphase, plays a key role in regulating the transcription of signal-inducible genes by associating with the P-TEFb complex and recruiting it to promoters. Also recruits P-TEFb complex to distal enhancers, so called anti-pause enhancers in collaboration with JMJD6. BRD4 and JMJD6 are required to form the transcriptionally active P-TEFb complex by displacing negative regulators such as HEXIM1 and 7SKsnRNA complex from P-TEFb, thereby transforming it into an active form that can then phosphorylate the C-terminal domain (CTD) of RNA polymerase II. Regulates differentiation of naive CD4(+) T-cells into T-helper Th17 by promoting recruitment of P-TEFb to promoters. Promotes phosphorylation of 'Ser-2' of the C-terminal domain (CTD) of RNA polymerase II. According to a report, directly acts as an atypical protein kinase and mediates phosphorylation of 'Ser-2' of the C-terminal domain (CTD) of RNA polymerase II; these data however need additional evidences in vivo. In addition to acetylated histones, also recognizes and binds acetylated RELA, leading to further recruitment of the P-TEFb complex and subsequent activation of NF-kappa-B. Also acts as a regulator of p53/TP53-mediated transcription: following phosphorylation by CK2, recruited to p53/TP53 specific target promoters. This is Bromodomain-containing protein 4 (Brd4) from Mus musculus (Mouse).